We begin with the raw amino-acid sequence, 865 residues long: Adenylate cyclase (865 aa).

A catalytic region spans residues 1-540; the sequence is MYLYIETLKQ…DISSHFPIRL (540 aa). Residues 546 to 865 are regulatory; the sequence is KALYSPCEIR…FNDYQAVHHH (320 aa).

Belongs to the adenylyl cyclase class-1 family.

It localises to the cytoplasm. It carries out the reaction ATP = 3',5'-cyclic AMP + diphosphate. This Proteus mirabilis protein is Adenylate cyclase (cya).